A 165-amino-acid chain; its full sequence is Endoribonuclease YbeY (165 aa).

Positions 119, 123, and 129 each coordinate Zn(2+).

The protein belongs to the endoribonuclease YbeY family. Requires Zn(2+) as cofactor.

The protein localises to the cytoplasm. In terms of biological role, single strand-specific metallo-endoribonuclease involved in late-stage 70S ribosome quality control and in maturation of the 3' terminus of the 16S rRNA. The protein is Endoribonuclease YbeY of Streptomyces griseus subsp. griseus (strain JCM 4626 / CBS 651.72 / NBRC 13350 / KCC S-0626 / ISP 5235).